The sequence spans 360 residues: Variable large protein 18 (360 aa).

Residues 1–26 form the signal peptide; it reads MRKRISAIINKLNISIMMMIVVLMIG. C27 carries N-palmitoyl cysteine lipidation. Residue C27 is the site of S-diacylglycerol cysteine attachment.

The protein belongs to the variable large protein (Vlp) family. Alpha subfamily.

Its subcellular location is the cell outer membrane. In terms of biological role, the Vlp and Vsp proteins are antigenically distinct proteins, only one vlp or vsp gene is transcriptionally active at any one time. Switching between these genes is a mechanism of host immune response evasion. The polypeptide is Variable large protein 18 (Borrelia hermsii).